The following is a 33-amino-acid chain: Cysteine-rich venom protein tripurin (33 aa).

Belongs to the CRISP family. In terms of processing, contains 8 disulfide bonds. In terms of tissue distribution, expressed by the venom gland.

The protein resides in the secreted. Blocks contraction of smooth muscle elicited by high potassium-induced depolarization, but does not block caffeine-stimulated contraction. May target voltage-gated calcium channels on smooth muscle. The sequence is that of Cysteine-rich venom protein tripurin from Trimeresurus purpureomaculatus (Mangrove pit viper).